A 298-amino-acid polypeptide reads, in one-letter code: ATP phosphoribosyltransferase (298 aa).

The protein belongs to the ATP phosphoribosyltransferase family. Long subfamily. Mg(2+) is required as a cofactor.

The protein localises to the cytoplasm. It carries out the reaction 1-(5-phospho-beta-D-ribosyl)-ATP + diphosphate = 5-phospho-alpha-D-ribose 1-diphosphate + ATP. Its pathway is amino-acid biosynthesis; L-histidine biosynthesis; L-histidine from 5-phospho-alpha-D-ribose 1-diphosphate: step 1/9. With respect to regulation, feedback inhibited by histidine. In terms of biological role, catalyzes the condensation of ATP and 5-phosphoribose 1-diphosphate to form N'-(5'-phosphoribosyl)-ATP (PR-ATP). Has a crucial role in the pathway because the rate of histidine biosynthesis seems to be controlled primarily by regulation of HisG enzymatic activity. This chain is ATP phosphoribosyltransferase, found in Psychromonas ingrahamii (strain DSM 17664 / CCUG 51855 / 37).